The chain runs to 745 residues: Multiple C2 domain and transmembrane region protein 13 (745 aa).

Residues 1-30 form a disordered region; that stretch reads MAANKDEFSVKQISPKLGGERGARNPYGPT. 3 C2 domains span residues 21–139, 171–293, and 326–453; these read RGAR…PQRY, DASE…SAPA, and AEES…ACSY. The Ca(2+) site is built by aspartate 56, aspartate 61, aspartate 106, and asparagine 110. The next 2 membrane-spanning stretches (helical) occupy residues 568–588 and 688–708; these read SLIV…LVGL and FYCW…PMWL.

Belongs to the MCTP family. Ca(2+) is required as a cofactor. In terms of tissue distribution, expressed in incipient leaf primordia.

It is found in the cell membrane. The protein localises to the cytoplasm. Its function is as follows. May function as a signaling molecule by regulating the trafficking of other regulators. This Arabidopsis thaliana (Mouse-ear cress) protein is Multiple C2 domain and transmembrane region protein 13.